Reading from the N-terminus, the 326-residue chain is tRNA uridine(34) hydroxylase (326 aa).

Residues 123 to 217 (ADPEVFVVDT…YLEEVPQEES (95 aa)) enclose the Rhodanese domain. Cys-177 serves as the catalytic Cysteine persulfide intermediate. The segment covering 278–288 (QVERFREREKQ) has biased composition (basic and acidic residues). The tract at residues 278–326 (QVERFREREKQVSLANQRGEQHVGGESAKQRAQRREAKLAKKAAQRKQA) is disordered. Over residues 317 to 326 (AKKAAQRKQA) the composition is skewed to basic residues.

The protein belongs to the TrhO family.

It catalyses the reaction uridine(34) in tRNA + AH2 + O2 = 5-hydroxyuridine(34) in tRNA + A + H2O. In terms of biological role, catalyzes oxygen-dependent 5-hydroxyuridine (ho5U) modification at position 34 in tRNAs. In Vibrio parahaemolyticus serotype O3:K6 (strain RIMD 2210633), this protein is tRNA uridine(34) hydroxylase.